Reading from the N-terminus, the 192-residue chain is E3 ubiquitin-protein ligase RNF185 (192 aa).

Low complexity predominate over residues 1–27 (MASKGPSASASPENSSAGGPSGSSNGA). The segment at 1-30 (MASKGPSASASPENSSAGGPSGSSNGAGES) is disordered. Residues 1-130 (MASKGPSASA…GGFQGFGFGD (130 aa)) lie on the Cytoplasmic side of the membrane. The segment at 29–80 (ESGGQDSTFECNICLDTAKDAVISLCGHLFCWPCLHQWLETRPNRQVCPVCK) is required for ubiquitin ligase activity and protection against ER stress-induced cell death. The RING-type zinc-finger motif lies at 39–80 (CNICLDTAKDAVISLCGHLFCWPCLHQWLETRPNRQVCPVCK). The disordered stretch occupies residues 90–123 (PLYGRGSTGQQDPREKTPPRPQGQRPEPENRGGF). A helical membrane pass occupies residues 131–151 (GGFQMSFGIGAFPFGIFATAF). Residues 152-171 (NINDGRPPPAVPGTPQYVDE) are Mitochondrial intermembrane-facing. The helical transmembrane segment at 172–192 (QFLSRLFLFVALVIMFWLLIA) threads the bilayer.

As to quaternary structure, interacts with ATG5 and BNIP1. Ubiquitously expressed.

The protein resides in the mitochondrion outer membrane. The protein localises to the endoplasmic reticulum membrane. It carries out the reaction S-ubiquitinyl-[E2 ubiquitin-conjugating enzyme]-L-cysteine + [acceptor protein]-L-lysine = [E2 ubiquitin-conjugating enzyme]-L-cysteine + N(6)-ubiquitinyl-[acceptor protein]-L-lysine.. The protein operates within protein modification; protein ubiquitination. E3 ubiquitin-protein ligase that regulates selective mitochondrial autophagy by mediating 'Lys-63'-linked polyubiquitination of BNIP1. Acts in the endoplasmic reticulum (ER)-associated degradation (ERAD) pathway, which targets misfolded proteins that accumulate in the endoplasmic reticulum (ER) for ubiquitination and subsequent proteasome-mediated degradation. Protects cells from ER stress-induced apoptosis. Responsible for the cotranslational ubiquitination and degradation of CFTR in the ERAD pathway. Also acts as a regulator of the innate antiviral response by catalyzing 'Lys-27'-linked polyubiquitination of CGAS at 'Lys-173' and 'Lys-384', thereby promoting CGAS cyclic GMP-AMP synthase activity. Preferentially associates with the E2 enzymes UBE2J1 and UBE2J2. This Homo sapiens (Human) protein is E3 ubiquitin-protein ligase RNF185.